The following is a 422-amino-acid chain: MNVSAVADLSPEARAALFERDAGIEDARESVRDIIGRVREEGDVALRSYAKEFDDVDIGTLAVTDEAERAYDDLDDDLRDAIETAAENIRTFHERQVPDDWREQFDGRELGRRYRPLERVGVYAPGGTAAYPSSVLMGVIPAVVAGVDHVAVATPPAEELPAATLAAAHVAGADAVYQVGGAQAIAALAYGTESVSAVQKVVGPGNRWVTAAKAEVRGDVEIDFLAGPSELLVVCDDTADPELIAADMVAQAEHDPNASVVCVSDDEATAEAVADACERQATARERTEAIESALENDASAVLCARSMSEAVLFAEEYAAEHLSIVAADEEALLDRIDSAGSVFLGGFSPVAVGDYASGTNHVLPTGGLAKVAGGLSVDHFVRSTTVQKLDEDALSSLRETVTTLARAEGLEAHAESVDKRFD.

Residues tyrosine 123, glutamine 183, and asparagine 206 each coordinate NAD(+). Substrate is bound by residues serine 229, glutamine 251, and histidine 254. Glutamine 251 and histidine 254 together coordinate Zn(2+). Active-site proton acceptor residues include glutamate 320 and histidine 321. Residues histidine 321, aspartate 354, glutamate 408, and histidine 413 each contribute to the substrate site. Aspartate 354 contacts Zn(2+). Histidine 413 is a Zn(2+) binding site.

It belongs to the histidinol dehydrogenase family. Zn(2+) is required as a cofactor.

The enzyme catalyses L-histidinol + 2 NAD(+) + H2O = L-histidine + 2 NADH + 3 H(+). Its pathway is amino-acid biosynthesis; L-histidine biosynthesis; L-histidine from 5-phospho-alpha-D-ribose 1-diphosphate: step 9/9. Its function is as follows. Catalyzes the sequential NAD-dependent oxidations of L-histidinol to L-histidinaldehyde and then to L-histidine. This chain is Histidinol dehydrogenase, found in Natronomonas pharaonis (strain ATCC 35678 / DSM 2160 / CIP 103997 / JCM 8858 / NBRC 14720 / NCIMB 2260 / Gabara) (Halobacterium pharaonis).